Reading from the N-terminus, the 129-residue chain is NADH-quinone oxidoreductase subunit A (129 aa).

3 helical membrane passes run 6 to 26, 63 to 83, and 89 to 109; these read FWPFILYAGMVLVLVALIVGF, LVAVLFVIFDMEAAFIFAWAV, and GWIGYGGALAFITILGVALIY.

This sequence belongs to the complex I subunit 3 family. As to quaternary structure, NDH-1 is composed of 14 different subunits. Subunits NuoA, H, J, K, L, M, N constitute the membrane sector of the complex.

Its subcellular location is the cell inner membrane. The enzyme catalyses a quinone + NADH + 5 H(+)(in) = a quinol + NAD(+) + 4 H(+)(out). Functionally, NDH-1 shuttles electrons from NADH, via FMN and iron-sulfur (Fe-S) centers, to quinones in the respiratory chain. The immediate electron acceptor for the enzyme in this species is believed to be ubiquinone. Couples the redox reaction to proton translocation (for every two electrons transferred, four hydrogen ions are translocated across the cytoplasmic membrane), and thus conserves the redox energy in a proton gradient. The polypeptide is NADH-quinone oxidoreductase subunit A (Nitrosococcus oceani (strain ATCC 19707 / BCRC 17464 / JCM 30415 / NCIMB 11848 / C-107)).